The sequence spans 375 residues: ELAV-like protein 2 (375 aa).

RRM domains lie at 67–145 (TNLI…YARP), 153–233 (ANLY…FANN), and 292–370 (WCIF…FKTS).

This sequence belongs to the RRM elav family. As to quaternary structure, part of a ribonucleoprotein (RNP) complex, at least composed of elavl1/elrA and/or elavl2/elrB, igf2bp3/vg1RBP, ddx6/Xp54, ybx2/frgy2, lsm14b/rap55b and, in a subset of RNP complexes, stau1/staufen. Binds RNA as a homooligomer.

Its subcellular location is the cytoplasm. It is found in the cell cortex. Functionally, binds to poly-U elements and AU-rich elements (AREs) in the 3'-UTR of target mRNAs. Required for the vegetal localization of vg1 mRNA. Probably required for nervous system development. This chain is ELAV-like protein 2, found in Xenopus tropicalis (Western clawed frog).